Reading from the N-terminus, the 456-residue chain is tRNA-2-methylthio-N(6)-dimethylallyladenosine synthase (456 aa).

Residues 18 to 136 (EFFFIQTFGC…FPEYLHRVQV (119 aa)) enclose the MTTase N-terminal domain. Residues Cys-27, Cys-63, Cys-97, Cys-173, Cys-177, and Cys-180 each contribute to the [4Fe-4S] cluster site. One can recognise a Radical SAM core domain in the interval 159 to 391 (RKSNVKAFVT…AVNEGIVVGN (233 aa)). Positions 392–455 (KAAEGKIYEV…SFSLVGEVVE (64 aa)) constitute a TRAM domain.

Belongs to the methylthiotransferase family. MiaB subfamily. In terms of assembly, monomer. [4Fe-4S] cluster serves as cofactor.

Its subcellular location is the cytoplasm. It carries out the reaction N(6)-dimethylallyladenosine(37) in tRNA + (sulfur carrier)-SH + AH2 + 2 S-adenosyl-L-methionine = 2-methylsulfanyl-N(6)-dimethylallyladenosine(37) in tRNA + (sulfur carrier)-H + 5'-deoxyadenosine + L-methionine + A + S-adenosyl-L-homocysteine + 2 H(+). Its function is as follows. Catalyzes the methylthiolation of N6-(dimethylallyl)adenosine (i(6)A), leading to the formation of 2-methylthio-N6-(dimethylallyl)adenosine (ms(2)i(6)A) at position 37 in tRNAs that read codons beginning with uridine. The polypeptide is tRNA-2-methylthio-N(6)-dimethylallyladenosine synthase (Clostridium botulinum (strain Alaska E43 / Type E3)).